Consider the following 741-residue polypeptide: Subtilisin-like protease SBT4.4 (741 aa).

The N-terminal stretch at 1–24 is a signal peptide; the sequence is MAKGTTFIFLFSSLLVLSLSSVSA. Positions 25–112 are cleaved as a propeptide — activation peptide; the sequence is DKDDHGDQQV…VFPSRKLKLQ (88 aa). An Inhibitor I9 domain is found at 34-111; it reads VYIVYLGSLP…SVFPSRKLKL (78 aa). Residues 116–589 form the Peptidase S8 domain; that stretch reads SWNFMGLKEG…SGHVDPIDAI (474 aa). Asp144 acts as the Charge relay system in catalysis. Asn175 and Asn195 each carry an N-linked (GlcNAc...) asparagine glycan. The Charge relay system role is filled by His204. N-linked (GlcNAc...) asparagine glycosylation is found at Asn227 and Asn357. The PA domain maps to 359 to 445; sequence TNYPLVYGKS…LSNDDYKSLV (87 aa). Asn449 carries an N-linked (GlcNAc...) asparagine glycan. The Charge relay system role is filled by Ser528. 4 N-linked (GlcNAc...) asparagine glycosylation sites follow: Asn565, Asn610, Asn623, and Asn654.

Belongs to the peptidase S8 family. In terms of processing, the C-terminal propeptide is autocleaved.

The protein resides in the secreted. The chain is Subtilisin-like protease SBT4.4 from Arabidopsis thaliana (Mouse-ear cress).